A 264-amino-acid chain; its full sequence is Protein ADMETOS (264 aa).

In terms of tissue distribution, paternally imprinted expression in the endosperm.

Functionally, product of a dosage-sensitive gene that contributes to the maintenance of paternally and maternally imprinted gene expression in the endosperm in order to balance parental contributions. Underlies postzygotic reproductive isolation by promoting triploid seed arrest in a genetic dosage-dependent manner, thus being a component of postzygotic interploidy hybridization barriers. In Arabidopsis thaliana (Mouse-ear cress), this protein is Protein ADMETOS.